The sequence spans 51 residues: Large ribosomal subunit protein eL39 (51 aa).

The protein belongs to the eukaryotic ribosomal protein eL39 family. As to quaternary structure, part of the 50S ribosomal subunit.

The chain is Large ribosomal subunit protein eL39 from Thermococcus kodakarensis (strain ATCC BAA-918 / JCM 12380 / KOD1) (Pyrococcus kodakaraensis (strain KOD1)).